The primary structure comprises 137 residues: TM2 domain-containing protein DDB_G0287015 (137 aa).

The TM2 domain maps to Gln9 to Phe57. A run of 2 helical transmembrane segments spans residues Leu12–Val32 and Val39–Leu59. Residues Ile106–Pro137 form a disordered region.

It belongs to the TM2 family.

It is found in the membrane. The polypeptide is TM2 domain-containing protein DDB_G0287015 (Dictyostelium discoideum (Social amoeba)).